The sequence spans 343 residues: Anthranilate phosphoribosyltransferase (343 aa).

Residues Gly79, 82–83 (GD), Thr87, 89–92 (NVST), 106–114 (KHGNRAASS), and Ser118 contribute to the 5-phospho-alpha-D-ribose 1-diphosphate site. An anthranilate-binding site is contributed by Gly79. Ser91 contributes to the Mg(2+) binding site. Position 109 (Asn109) interacts with anthranilate. Arg164 contributes to the anthranilate binding site. 2 residues coordinate Mg(2+): Asp223 and Glu224.

It belongs to the anthranilate phosphoribosyltransferase family. As to quaternary structure, homodimer. Mg(2+) is required as a cofactor.

The catalysed reaction is N-(5-phospho-beta-D-ribosyl)anthranilate + diphosphate = 5-phospho-alpha-D-ribose 1-diphosphate + anthranilate. It participates in amino-acid biosynthesis; L-tryptophan biosynthesis; L-tryptophan from chorismate: step 2/5. Functionally, catalyzes the transfer of the phosphoribosyl group of 5-phosphorylribose-1-pyrophosphate (PRPP) to anthranilate to yield N-(5'-phosphoribosyl)-anthranilate (PRA). In Metallosphaera sedula (strain ATCC 51363 / DSM 5348 / JCM 9185 / NBRC 15509 / TH2), this protein is Anthranilate phosphoribosyltransferase.